We begin with the raw amino-acid sequence, 464 residues long: Serine/threonine-protein kinase 38-like (464 aa).

Ala-2 is subject to N-acetylalanine. The tract at residues 63–88 (KKLRRSQHARKETEFLRLKRTRLGLD) is S100B binding. Residue Thr-75 is modified to Phosphothreonine. Residues 90–383 (FESLKVIGRG…VEEIKGHPFF (294 aa)) enclose the Protein kinase domain. ATP-binding positions include 96-104 (IGRGAFGEV) and Lys-119. Asp-213 functions as the Proton acceptor in the catalytic mechanism. The residue at position 282 (Ser-282) is a Phosphoserine; by autocatalysis. The AGC-kinase C-terminal domain maps to 384 to 453 (EGVDWEHIRE…KRFEGLTQRG (70 aa)). Thr-442 is subject to Phosphothreonine; by STK24/MST3.

The protein belongs to the protein kinase superfamily. AGC Ser/Thr protein kinase family. In terms of assembly, homodimeric S100B binds two molecules of STK38L. Interacts with MICAL1; leading to inhibit the protein kinase activity by antagonizing activation by MST1/STK4. Interacts with MOB1 and MOB2. It depends on Mg(2+) as a cofactor. In terms of tissue distribution, ubiquitously expressed with highest levels observed in the thymus.

Its subcellular location is the cytoplasm. It localises to the cytoskeleton. It is found in the membrane. It carries out the reaction L-seryl-[protein] + ATP = O-phospho-L-seryl-[protein] + ADP + H(+). The enzyme catalyses L-threonyl-[protein] + ATP = O-phospho-L-threonyl-[protein] + ADP + H(+). Activated by binding of S100B which releases autoinhibitory N-lobe interactions, enabling ATP to bind and the autophosphorylation of Ser-282. Thr-442 then undergoes calcium-dependent phosphorylation by STK24/MST3. Interactions between phosphorylated Thr-442 and the N-lobe promote additional structural changes that complete the activation of the kinase. Autoinhibition is also released by the binding of MOB1/MOBKL1A and MOB2/HCCA2 to the N-terminal of STK38L. Involved in the regulation of structural processes in differentiating and mature neuronal cells. This is Serine/threonine-protein kinase 38-like from Homo sapiens (Human).